A 141-amino-acid chain; its full sequence is Large ribosomal subunit protein uL11 (141 aa).

The protein belongs to the universal ribosomal protein uL11 family. In terms of assembly, part of the ribosomal stalk of the 50S ribosomal subunit. Interacts with L10 and the large rRNA to form the base of the stalk. L10 forms an elongated spine to which L12 dimers bind in a sequential fashion forming a multimeric L10(L12)X complex. In terms of processing, one or more lysine residues are methylated.

Its function is as follows. Forms part of the ribosomal stalk which helps the ribosome interact with GTP-bound translation factors. The protein is Large ribosomal subunit protein uL11 of Thermotoga neapolitana (strain ATCC 49049 / DSM 4359 / NBRC 107923 / NS-E).